The following is a 258-amino-acid chain: Trans-aconitate 2-methyltransferase (258 aa).

It belongs to the methyltransferase superfamily. Tam family.

The protein resides in the cytoplasm. The catalysed reaction is trans-aconitate + S-adenosyl-L-methionine = (E)-3-(methoxycarbonyl)pent-2-enedioate + S-adenosyl-L-homocysteine. Its function is as follows. Catalyzes the S-adenosylmethionine monomethyl esterification of trans-aconitate. The protein is Trans-aconitate 2-methyltransferase of Yersinia pestis bv. Antiqua (strain Antiqua).